The sequence spans 291 residues: MASSSVSSLQFLFVTPQTPSSLKPNSTLSFFSLPSSSLNLSLSSSSTGLCSIKPFESSFSTRVALSGFDQLEDDVEVAEQPRFSEDLKLFVGNLPFSVDSAALAGLFERAGNVEMVEVIYDKLTGRSRGFGFVTMSTKEEVEAAEQQFNGYEIDGRAIRVNAGPAPAKRENSSFGGGRGGNSSYGGGRDGNSSFGGARGGRSVDSSNRVYVGNLSWGVDDLALKELFSEQGNVVDAKVVYDRDSGRSRGFGFVTYSSSKEVNDAIDSLNGVDLDGRSIRVSAAEERPRRQF.

The RRM 1 domain occupies 87-165; sequence LKLFVGNLPF…RAIRVNAGPA (79 aa). Positions 164–202 are disordered; sequence PAPAKRENSSFGGGRGGNSSYGGGRDGNSSFGGARGGRS. The tract at residues 166 to 206 is linker (Gly-rich); the sequence is PAKRENSSFGGGRGGNSSYGGGRDGNSSFGGARGGRSVDSS. Positions 174–189 are enriched in gly residues; it reads FGGGRGGNSSYGGGRD. One can recognise an RRM 2 domain in the interval 207 to 285; that stretch reads NRVYVGNLSW…RSIRVSAAEE (79 aa).

The protein resides in the plastid. Its subcellular location is the chloroplast. Could be involved in splicing and/or processing of chloroplast RNA's. The polypeptide is 29 kDa ribonucleoprotein B, chloroplastic (Nicotiana sylvestris (Wood tobacco)).